Reading from the N-terminus, the 649-residue chain is Mitochondrial Rho GTPase 1 (649 aa).

Over 1-623 the chain is Cytoplasmic; that stretch reads MTKETIRVVI…KPTNIDYSSA (623 aa). A Miro 1 domain is found at 3–176; the sequence is KETIRVVICG…FYLCQRSISY (174 aa). Residues 12–19, 61–63, and 115–118 each bind GTP; these read GDDGVGKT, DTD, and NKCD. EF-hand domains are found at residues 192 to 227 and 320 to 355; these read SAVAALSRIFFLSDEDQDGFLNDNEIMDLQRKCFGK and KGYRFLVDIFIKFDSDNDGALNDTELHTLFRSTPGL. The Ca(2+) site is built by D205, D207, D209, E216, D333, D335, D337, and E344. The Miro 2 domain maps to 436 to 601; that stretch reads RKVFNCFVVG…FKKIIQASLE (166 aa). GTP-binding positions include 445–452, 481–485, and 550–553; these read GKRNSGKS, EVTGD, and LKAD. Residues 624–644 traverse the membrane as a helical; Anchor for type IV membrane protein segment; it reads VILGSSIGFLALFSYTMIKLL. The Mitochondrial intermembrane segment spans residues 645–649; that stretch reads KPTQQ.

The protein belongs to the mitochondrial Rho GTPase family.

The protein localises to the mitochondrion outer membrane. Functionally, mitochondrial GTPase involved in mitochondrial trafficking. Probably involved in control of anterograde transport of mitochondria and their subcellular distribution. The chain is Mitochondrial Rho GTPase 1 (GEM1) from Candida glabrata (strain ATCC 2001 / BCRC 20586 / JCM 3761 / NBRC 0622 / NRRL Y-65 / CBS 138) (Yeast).